Reading from the N-terminus, the 242-residue chain is Biosynthetic peptidoglycan transglycosylase (242 aa).

A helical membrane pass occupies residues 19 to 39 (LMVVLAVFWGGGIALFSVAPV).

The protein belongs to the glycosyltransferase 51 family.

The protein resides in the cell inner membrane. The catalysed reaction is [GlcNAc-(1-&gt;4)-Mur2Ac(oyl-L-Ala-gamma-D-Glu-L-Lys-D-Ala-D-Ala)](n)-di-trans,octa-cis-undecaprenyl diphosphate + beta-D-GlcNAc-(1-&gt;4)-Mur2Ac(oyl-L-Ala-gamma-D-Glu-L-Lys-D-Ala-D-Ala)-di-trans,octa-cis-undecaprenyl diphosphate = [GlcNAc-(1-&gt;4)-Mur2Ac(oyl-L-Ala-gamma-D-Glu-L-Lys-D-Ala-D-Ala)](n+1)-di-trans,octa-cis-undecaprenyl diphosphate + di-trans,octa-cis-undecaprenyl diphosphate + H(+). It participates in cell wall biogenesis; peptidoglycan biosynthesis. Its function is as follows. Peptidoglycan polymerase that catalyzes glycan chain elongation from lipid-linked precursors. In Escherichia coli (strain ATCC 8739 / DSM 1576 / NBRC 3972 / NCIMB 8545 / WDCM 00012 / Crooks), this protein is Biosynthetic peptidoglycan transglycosylase.